Here is a 180-residue protein sequence, read N- to C-terminus: ATP synthase subunit delta (180 aa).

Belongs to the ATPase delta chain family. As to quaternary structure, F-type ATPases have 2 components, F(1) - the catalytic core - and F(0) - the membrane proton channel. F(1) has five subunits: alpha(3), beta(3), gamma(1), delta(1), epsilon(1). F(0) has three main subunits: a(1), b(2) and c(10-14). The alpha and beta chains form an alternating ring which encloses part of the gamma chain. F(1) is attached to F(0) by a central stalk formed by the gamma and epsilon chains, while a peripheral stalk is formed by the delta and b chains.

Its subcellular location is the cell inner membrane. F(1)F(0) ATP synthase produces ATP from ADP in the presence of a proton or sodium gradient. F-type ATPases consist of two structural domains, F(1) containing the extramembraneous catalytic core and F(0) containing the membrane proton channel, linked together by a central stalk and a peripheral stalk. During catalysis, ATP synthesis in the catalytic domain of F(1) is coupled via a rotary mechanism of the central stalk subunits to proton translocation. Its function is as follows. This protein is part of the stalk that links CF(0) to CF(1). It either transmits conformational changes from CF(0) to CF(1) or is implicated in proton conduction. This chain is ATP synthase subunit delta, found in Geobacter metallireducens (strain ATCC 53774 / DSM 7210 / GS-15).